A 322-amino-acid chain; its full sequence is uncharacterized protein (322 aa).

A signal peptide spans 1–32 (MRDGIGKRAASALFLCGVLVMLAVSSAIVSSA).

This is an uncharacterized protein from Bacillus subtilis (strain 168).